A 129-amino-acid chain; its full sequence is Small ribosomal subunit protein uS8 (129 aa).

This sequence belongs to the universal ribosomal protein uS8 family. In terms of assembly, part of the 30S ribosomal subunit. Contacts proteins S5 and S12.

In terms of biological role, one of the primary rRNA binding proteins, it binds directly to 16S rRNA central domain where it helps coordinate assembly of the platform of the 30S subunit. The sequence is that of Small ribosomal subunit protein uS8 from Bdellovibrio bacteriovorus (strain ATCC 15356 / DSM 50701 / NCIMB 9529 / HD100).